Consider the following 480-residue polypeptide: F-box/LRR-repeat protein 14 (480 aa).

Positions 11 to 58 (DRQMDELPDHLVWDILSKLHTTDDRNSLSLSCKRFFSLDNEQRYSLRI) constitute an F-box domain. LRR repeat units lie at residues 61–86 (GLVPASDALLSLCRRFPNLSKVEIIY), 94–119 (GKQVDDQGLLVLTTNCHSLTDLTLSF), 120–144 (CTFITDVGIGHLSSCPELSSLKLNF), 145–170 (APRITGCGVLSLAVGCKKLRRLHLIR), 171–196 (CLNVASVEWLEYFGKLETLEELCIKN), 197–222 (CRAIGEGDLIKLRNSWRKLTSLQFEV), 229–257 (MKVYDQLDVERWPKQLVPCDSLVELSLGN), 258–283 (CIIAPGRGLACVLRNCKNLEKLHLDM), 284–309 (CTGVSDSDIIALVQKASHLRSISLRV), 322–347 (TLRLTDESLSAIAQHCSKLESFKISF), 355–379 (LFSFTLQGIITLIQKCPVRELSLDH), 380–404 (VCVFNDMGMEALCSAQKLEILELVH), 405–429 (CQEVSDEGLILVSQFPSLNVLKLSK), 430–454 (CLGVTDDGMRPLVGSHKLELLVVED), and 455–480 (CPQVSRRGVHGAATSVSFKQDLSWMY).

This is F-box/LRR-repeat protein 14 (FBL14) from Arabidopsis thaliana (Mouse-ear cress).